The primary structure comprises 520 residues: Developmental regulatory protein wetA (520 aa).

3 stretches are compositionally biased toward polar residues: residues 109–118 (TATHALSISP), 155–165 (QSFSPSLMRSS), and 378–392 (SSQK…SQVH). Disordered stretches follow at residues 109 to 165 (TATH…MRSS), 378 to 454 (SSQK…SNKS), and 468 to 496 (KKIL…RRRK). The span at 420–429 (PTHRRTHSRK) shows a compositional bias: basic residues. A compositionally biased stretch (low complexity) spans 445–454 (SSSSRGSNKS).

This sequence belongs to the wetA family.

Its function is as follows. BrlA, abaA and wetA are pivotal regulators of conidiophore development and conidium maturation. They act individually and together to regulate their own expression and that of numerous other sporulation-specific genes. The chain is Developmental regulatory protein wetA from Penicillium roqueforti (strain FM164).